Here is a 222-residue protein sequence, read N- to C-terminus: Small ribosomal subunit protein uS7m (222 aa).

The N-terminal 14 residues, 1–14, are a transit peptide targeting the mitochondrion; sequence MSKKLANFAQKRWI.

This sequence belongs to the universal ribosomal protein uS7 family. As to quaternary structure, component of the mitochondrial ribosome small subunit (28S) which comprises a 12S rRNA and about 30 distinct proteins.

The protein resides in the mitochondrion. This chain is Small ribosomal subunit protein uS7m (mrps-7), found in Caenorhabditis briggsae.